The following is a 668-amino-acid chain: MSNKAVVFAYHDIGCAGIEALLNAGYEIAAVFTHADDPKENTFYGSVAQLCARKGIAVHAPEDANHPLWIERIAKLNPDYLFSFYYRNLLSEPLLATASKGAFNLHGSLLPRYRGRAPANWVLVKGETETGVTLHRMVKRADAGAIIAQERVAIERSDTALSLHHKLRDAAASLLRDTLPALAQGKITETAQDESKASYFGRRTAADGKIDWQRPAEELFNLVRAVTQPYPGAFCAVGEHKLIVWSAEVAKGNEGQAPGRVISVDPLRIACGQDSLVITSGQRNANGLFLGGPQLANELGLVDGSLLRGAESGRKPRRTRVLILGVNGFIGNHLSERLLRDDKYDVYGLDIGSDAIERLRSHPNFHFVEGDISIHSEWIEYHIKKCDVVLPLVAIATPIEYTRNPLRVFELDFEENLKLVRYCVKYNKRVIFPSTSEVYGMCQDKNFDEDTSNLIVGPINKQRWIYSVSKQLLDRVIWAYGAKGLNFTLFRPFNWMGPRLDRLDSARIGSSRAITQLILNLVEGTPIRLFDGGEQKRCFTDIADGIEALARIVDNENDCCNGQIINIGNPDNEASIRQLGEELLRQFEAHPLRGNFPPFAGFRDVESKAFYGAGYQDVEHRKPSIDNAKRLLNWEPTVEMSETIGNTLDFFLREAMLEIADRAKQEAR.

Residues Met1–Leu307 form a formyltransferase ArnAFT region. The Proton donor; for formyltransferase activity role is filled by His106. (6R)-10-formyltetrahydrofolate-binding positions include Arg116 and Val138–Asp142. The dehydrogenase ArnADH stretch occupies residues Arg317–Arg668. Residues Asp350 and Asp371–Ile372 contribute to the NAD(+) site. UDP-alpha-D-glucuronate contacts are provided by residues Ala396, Tyr401, and Thr435–Ser436. Residue Glu437 is the Proton acceptor; for decarboxylase activity of the active site. UDP-alpha-D-glucuronate-binding positions include Arg463, Asn494, Arg528 to Arg537, and Tyr615. Arg621 acts as the Proton donor; for decarboxylase activity in catalysis.

This sequence in the N-terminal section; belongs to the Fmt family. UDP-L-Ara4N formyltransferase subfamily. In the C-terminal section; belongs to the NAD(P)-dependent epimerase/dehydratase family. UDP-glucuronic acid decarboxylase subfamily. Homohexamer, formed by a dimer of trimers.

The catalysed reaction is UDP-alpha-D-glucuronate + NAD(+) = UDP-beta-L-threo-pentopyranos-4-ulose + CO2 + NADH. It catalyses the reaction UDP-4-amino-4-deoxy-beta-L-arabinose + (6R)-10-formyltetrahydrofolate = UDP-4-deoxy-4-formamido-beta-L-arabinose + (6S)-5,6,7,8-tetrahydrofolate + H(+). It functions in the pathway nucleotide-sugar biosynthesis; UDP-4-deoxy-4-formamido-beta-L-arabinose biosynthesis; UDP-4-deoxy-4-formamido-beta-L-arabinose from UDP-alpha-D-glucuronate: step 1/3. Its pathway is nucleotide-sugar biosynthesis; UDP-4-deoxy-4-formamido-beta-L-arabinose biosynthesis; UDP-4-deoxy-4-formamido-beta-L-arabinose from UDP-alpha-D-glucuronate: step 3/3. It participates in bacterial outer membrane biogenesis; lipopolysaccharide biosynthesis. Its function is as follows. Bifunctional enzyme that catalyzes the oxidative decarboxylation of UDP-glucuronic acid (UDP-GlcUA) to UDP-4-keto-arabinose (UDP-Ara4O) and the addition of a formyl group to UDP-4-amino-4-deoxy-L-arabinose (UDP-L-Ara4N) to form UDP-L-4-formamido-arabinose (UDP-L-Ara4FN). The modified arabinose is attached to lipid A and is required for resistance to polymyxin and cationic antimicrobial peptides. The chain is Bifunctional polymyxin resistance protein ArnA from Pseudomonas fluorescens (strain ATCC BAA-477 / NRRL B-23932 / Pf-5).